We begin with the raw amino-acid sequence, 484 residues long: Cobyric acid synthase (484 aa).

A GATase cobBQ-type domain is found at 248-435 (VLKVIVPVLP…LHGLFEGSQS (188 aa)). The Nucleophile role is filled by Cys329. The active site involves His427.

Belongs to the CobB/CobQ family. CobQ subfamily.

It functions in the pathway cofactor biosynthesis; adenosylcobalamin biosynthesis. Functionally, catalyzes amidations at positions B, D, E, and G on adenosylcobyrinic A,C-diamide. NH(2) groups are provided by glutamine, and one molecule of ATP is hydrogenolyzed for each amidation. This is Cobyric acid synthase from Pseudomonas putida (strain ATCC 700007 / DSM 6899 / JCM 31910 / BCRC 17059 / LMG 24140 / F1).